Reading from the N-terminus, the 432-residue chain is Phosphomethylpyrimidine synthase (432 aa).

Residues asparagine 66, methionine 95, tyrosine 124, histidine 163, 185-187 (SRG), 226-229 (DGLR), and glutamate 265 each bind substrate. A Zn(2+)-binding site is contributed by histidine 269. Residue tyrosine 292 participates in substrate binding. A Zn(2+)-binding site is contributed by histidine 333. Residues cysteine 409, cysteine 412, and cysteine 416 each coordinate [4Fe-4S] cluster.

The protein belongs to the ThiC family. The cofactor is [4Fe-4S] cluster.

It catalyses the reaction 5-amino-1-(5-phospho-beta-D-ribosyl)imidazole + S-adenosyl-L-methionine = 4-amino-2-methyl-5-(phosphooxymethyl)pyrimidine + CO + 5'-deoxyadenosine + formate + L-methionine + 3 H(+). The protein operates within cofactor biosynthesis; thiamine diphosphate biosynthesis. Its function is as follows. Catalyzes the synthesis of the hydroxymethylpyrimidine phosphate (HMP-P) moiety of thiamine from aminoimidazole ribotide (AIR) in a radical S-adenosyl-L-methionine (SAM)-dependent reaction. This Moorella thermoacetica (strain ATCC 39073 / JCM 9320) protein is Phosphomethylpyrimidine synthase.